Consider the following 195-residue polypeptide: Probable WRKY transcription factor 56 (195 aa).

Polar residues predominate over residues 1-10; that stretch reads MEGVDNTNPM. Disordered stretches follow at residues 1 to 20 and 70 to 93; these read MEGV…ENNN and EMGG…KGKG. Residues 108–173 constitute a DNA-binding region (WRKY); that stretch reads SDDDVLDDGY…YEGVHNHPCE (66 aa).

This sequence belongs to the WRKY group II-c family.

It localises to the nucleus. Transcription factor. Interacts specifically with the W box (5'-(T)TGAC[CT]-3'), a frequently occurring elicitor-responsive cis-acting element. This Arabidopsis thaliana (Mouse-ear cress) protein is Probable WRKY transcription factor 56 (WRKY56).